The sequence spans 513 residues: ATP synthase subunit alpha (513 aa).

Residue 171–178 (GDRQIGKT) coordinates ATP.

This sequence belongs to the ATPase alpha/beta chains family. As to quaternary structure, F-type ATPases have 2 components, CF(1) - the catalytic core - and CF(0) - the membrane proton channel. CF(1) has five subunits: alpha(3), beta(3), gamma(1), delta(1), epsilon(1). CF(0) has three main subunits: a(1), b(2) and c(9-12). The alpha and beta chains form an alternating ring which encloses part of the gamma chain. CF(1) is attached to CF(0) by a central stalk formed by the gamma and epsilon chains, while a peripheral stalk is formed by the delta and b chains.

The protein resides in the cell membrane. It carries out the reaction ATP + H2O + 4 H(+)(in) = ADP + phosphate + 5 H(+)(out). Produces ATP from ADP in the presence of a proton gradient across the membrane. The alpha chain is a regulatory subunit. The chain is ATP synthase subunit alpha from Wolbachia pipientis subsp. Culex pipiens (strain wPip).